The sequence spans 416 residues: NADH-quinone oxidoreductase subunit D (416 aa).

The protein belongs to the complex I 49 kDa subunit family. As to quaternary structure, NDH-1 is composed of 14 different subunits. Subunits NuoB, C, D, E, F, and G constitute the peripheral sector of the complex.

It is found in the cell inner membrane. The catalysed reaction is a quinone + NADH + 5 H(+)(in) = a quinol + NAD(+) + 4 H(+)(out). In terms of biological role, NDH-1 shuttles electrons from NADH, via FMN and iron-sulfur (Fe-S) centers, to quinones in the respiratory chain. The immediate electron acceptor for the enzyme in this species is believed to be ubiquinone. Couples the redox reaction to proton translocation (for every two electrons transferred, four hydrogen ions are translocated across the cytoplasmic membrane), and thus conserves the redox energy in a proton gradient. This Gluconacetobacter diazotrophicus (strain ATCC 49037 / DSM 5601 / CCUG 37298 / CIP 103539 / LMG 7603 / PAl5) protein is NADH-quinone oxidoreductase subunit D.